A 135-amino-acid polypeptide reads, in one-letter code: Small ribosomal subunit protein bS6 (135 aa).

The disordered stretch occupies residues 104-135; that stretch reads FSRLDRNGHIGHDEKHPRSPSRQREDVIEGVE.

This sequence belongs to the bacterial ribosomal protein bS6 family.

Functionally, binds together with bS18 to 16S ribosomal RNA. The polypeptide is Small ribosomal subunit protein bS6 (Bartonella henselae (strain ATCC 49882 / DSM 28221 / CCUG 30454 / Houston 1) (Rochalimaea henselae)).